The following is a 699-amino-acid chain: Kinesin-like protein KIF3A (699 aa).

Residues 14–345 enclose the Kinesin motor domain; it reads NVKVVVRCRP…LRYANRAKNI (332 aa). Position 100 to 107 (100 to 107) interacts with ATP; that stretch reads GQTGTGKT. Residues 355-590 adopt a coiled-coil conformation; that stretch reads PKDALLRQFQ…LSRELRLQML (236 aa). Disordered stretches follow at residues 372–421 and 663–699; these read KKLE…KMIE and SLMK…SLLQ. A compositionally biased stretch (acidic residues) spans 376–400; that stretch reads EGEEISGSDISGSEEDDDEEGEVGE. Positions 672-687 are enriched in basic residues; that stretch reads TSKGKARPKTGRRKRS. A Phosphoserine modification is found at Ser-687. The tract at residues 697–699 is globular; sequence LLQ.

Belongs to the TRAFAC class myosin-kinesin ATPase superfamily. Kinesin family. Kinesin II subfamily. In terms of assembly, heterodimer of KIF3A and KIF3B. Interacts with CIMAP3. Interacts with CLN3. Interacts with DCTN1. Interacts with FLCN. Interacts with AP3B1.

It localises to the cytoplasm. The protein resides in the cytoskeleton. It is found in the cell projection. The protein localises to the cilium. Its subcellular location is the microtubule organizing center. It localises to the centrosome. The protein resides in the centriole. Functionally, microtubule-based anterograde translocator for membranous organelles. Plus end-directed microtubule sliding activity in vitro. Plays a role in primary cilia formation. Plays a role in centriole cohesion and subdistal appendage organization and function. Regulates the formation of the subdistal appendage via recruitment of DCTN1 to the centriole. Also required for ciliary basal feet formation and microtubule anchoring to mother centriole. This is Kinesin-like protein KIF3A (KIF3A) from Homo sapiens (Human).